The chain runs to 224 residues: Small ribosomal subunit protein uS3 (224 aa).

In terms of domain architecture, KH type-2 spans 20–89; the sequence is LDEFLANYFK…NVNITVSPVP (70 aa).

It belongs to the universal ribosomal protein uS3 family. As to quaternary structure, part of the 30S ribosomal subunit.

Binds the lower part of the 30S subunit head. This is Small ribosomal subunit protein uS3 from Staphylothermus marinus (strain ATCC 43588 / DSM 3639 / JCM 9404 / F1).